Here is a 372-residue protein sequence, read N- to C-terminus: NAD(P)H-quinone oxidoreductase subunit 1 (372 aa).

A run of 8 helical transmembrane segments spans residues 27-47 (LIWL…GVLV), 97-117 (LLFT…WLIV), 128-148 (VGVG…GLLM), 166-186 (AAQS…VVMM), 204-224 (ILSW…ICAL), 266-286 (VLSA…PVPV), 308-328 (ATGI…AILL), and 347-367 (FLLP…LAFP).

Belongs to the complex I subunit 1 family. As to quaternary structure, NDH-1 is composed of at least 11 different subunits.

It is found in the cellular thylakoid membrane. It carries out the reaction a plastoquinone + NADH + (n+1) H(+)(in) = a plastoquinol + NAD(+) + n H(+)(out). The enzyme catalyses a plastoquinone + NADPH + (n+1) H(+)(in) = a plastoquinol + NADP(+) + n H(+)(out). NDH-1 shuttles electrons from an unknown electron donor, via FMN and iron-sulfur (Fe-S) centers, to quinones in the respiratory and/or the photosynthetic chain. The immediate electron acceptor for the enzyme in this species is believed to be plastoquinone. Couples the redox reaction to proton translocation, and thus conserves the redox energy in a proton gradient. The chain is NAD(P)H-quinone oxidoreductase subunit 1 from Synechococcus sp. (strain WH7803).